We begin with the raw amino-acid sequence, 57 residues long: Potassium channel toxin alpha-KTx 26.1 (57 aa).

The first 22 residues, 1 to 22 (MSRLFVFILIALFLSAIIDVMS), serve as a signal peptide directing secretion. 3 disulfides stabilise this stretch: C30–C48, C34–C53, and C38–C55.

This sequence belongs to the short scorpion toxin superfamily. Potassium channel inhibitor family. Alpha-KTx 26 subfamily. In terms of tissue distribution, expressed by the venom gland.

It localises to the secreted. Its function is as follows. Recombinant toxin that reversibly inhibits the potassium current of mKv1.3/KCNA3 channel stably expressed in COS7 cells (IC(50)=150 nM). Also shows a weak inhibition on Kv1.2/KCNA2, Kv1.3/KCNA3 and TRPV1 channels. This is Potassium channel toxin alpha-KTx 26.1 from Olivierus martensii (Manchurian scorpion).